Reading from the N-terminus, the 1095-residue chain is Solute carrier family 12 member 1 (1095 aa).

The Cytoplasmic segment spans residues 1–173 (MSVSIPSNSV…EEDMTGVVKF (173 aa)). An RFXV motif motif is present at residues 16–19 (RFQV). Residues 29-49 (AAAVGDSADPPHYEETSFGDE) are disordered. 2 positions are modified to phosphoserine: S57 and S87. Phosphothreonine occurs at positions 91, 96, 101, and 114. The residue at position 116 (S116) is a Phosphoserine. S126 bears the Phosphoserine; by AMPK mark. S144 carries the post-translational modification Phosphoserine. A helical membrane pass occupies residues 174-194 (GWVKGVLVRCMLNIWGVMLFI). Over 195 to 197 (RLS) the chain is Extracellular. Residues 198–218 (WIVGEAGIGLGVLIILLSTMV) form a helical membrane-spanning segment. Over 219-255 (TSITGLSTSAIATNGFVRGGGAYYLISRSLGPEFGGS) the chain is Cytoplasmic. Residues 256-276 (IGLIFAFANAVAVAMYVVGFA) form a helical membrane-spanning segment. Topologically, residues 277-298 (ETVVDLLKESDSMMVDPTNDIR) are extracellular. Residues 299–319 (IIGSITVVILLGISVAGMEWE) traverse the membrane as a helical segment. The Cytoplasmic segment spans residues 320-323 (AKAQ). A helical transmembrane segment spans residues 324 to 344 (VILLVILLIAIANFFIGTVIP). The Extracellular portion of the chain corresponds to 345-375 (SNNEKKSRGFFNYQASIFAENFGPSFTKGEG). The helical transmembrane segment at 376-396 (FFSVFAIFFPAATGILAGANI) threads the bilayer. Topologically, residues 397-413 (SGDLEDPQDAIPRGTML) are cytoplasmic. Residues 414–434 (AIFITTVAYIGVAICVAACVV) traverse the membrane as a helical segment. The Extracellular segment spans residues 435 to 546 (RDATGSMNDT…NNEPLRGYFL (112 aa)). N442 and N452 each carry an N-linked (GlcNAc...) asparagine glycan. Helical transmembrane passes span 547 to 567 (TFVI…APII) and 568 to 588 (SNFF…ASYA). Over 589–605 (KSPGWRPAYGIYNMWVS) the chain is Extracellular. A helical transmembrane segment spans residues 606–626 (LFGAILCCAVMFVINWWAAVI). At 627–1095 (TYVIELFLYI…NHKNVLTFYS (469 aa)) the chain is on the cytoplasmic side.

The protein belongs to the SLC12A transporter family. In terms of assembly, when phosphorylated, interacts with PPP3CB. Phosphorylated at Ser-87, Thr-96 and Thr-101 by OXSR1/OSR1 and STK39/SPAK downstream of WNK kinases (WNK1, WNK2, WNK3 or WNK4), promoting its activity. Short-term cyclosporine administration increases SLC12A1 phosphorylation in kidney thick ascending limb, possibly through the inhibition of PPP3CB/calcineurin A beta phosphatase. As to expression, predominantly expressed in kidney (at protein level). In terms of tissue distribution, kidney-specific; most highly expressed in the outer stripe of outer medulla (at protein level). Kidney-specific; most highly expressed in the cortical thick ascending limb (at protein level). As to expression, kidney-specific; most highly expressed in the inner stripe of outer medulla (at protein level).

The protein localises to the apical cell membrane. The catalysed reaction is K(+)(out) + 2 chloride(out) + Na(+)(out) = K(+)(in) + 2 chloride(in) + Na(+)(in). With respect to regulation, activated following phosphorylation by OXSR1/OSR1 and STK39/SPAK downstream of WNK kinases (WNK1, WNK2, WNK3 or WNK4). Inhibited by mercury dichloride and diuretic drug bumetaide. Inactive in isotonic conditions. Functionally, renal sodium, potassium and chloride ion cotransporter that mediates the transepithelial NaCl reabsorption in the thick ascending limb and plays an essential role in the urinary concentration and volume regulation. Electrically silent transporter system. Its function is as follows. High affinity, high capacity cotransporter for sodium, potassium and chloride ions, with a coupling ratio 1Na(+):1K(+):2Cl(-). In terms of biological role, high affinity, low capacity cotransporter for sodium, potassium and chloride ions, with a coupling ratio 1Na(+):1K(+):2Cl(-). Low affinity, low capacity cotransporter for sodium, potassium and chloride ions, with a coupling ratio 1Na(+):1K(+):2Cl(-). The protein is Solute carrier family 12 member 1 (Slc12a1) of Mus musculus (Mouse).